The following is a 1023-amino-acid chain: Cell division cycle-associated protein 2 (1023 aa).

Residues 1-14 (MDANSKDKPPETKE) are compositionally biased toward basic and acidic residues. Positions 1 to 21 (MDANSKDKPPETKESAMNNAG) are disordered. S98, S120, S126, S131, S210, S291, and S309 each carry phosphoserine. T312 carries the phosphothreonine modification. In terms of domain architecture, PP1-binding spans 389 to 449 (KRKRVTFGED…PEPLPQPDFD (61 aa)). 2 positions are modified to phosphoserine: S400 and S407. A Phosphothreonine modification is found at T412. Position 437 is a phosphoserine (S437). The interval 542–580 (SQETKCTKRALPKKSQVLKSCRKKKGKGKKSVQKSLYGE) is disordered. Residues 561–573 (SCRKKKGKGKKSV) show a composition bias toward basic residues. 2 positions are modified to phosphoserine: S591 and S614. Positions 667-729 (SSLGNATSDE…ERVASDSPKP (63 aa)) are disordered. Residues 679–691 (NTNIMNINENKNI) are compositionally biased toward low complexity. Residues 696-706 (NKSESENEPKA) show a composition bias toward basic and acidic residues. S710 and S756 each carry phosphoserine. A Glycyl lysine isopeptide (Lys-Gly) (interchain with G-Cter in SUMO2) cross-link involves residue K762. A compositionally biased stretch (basic and acidic residues) spans 803–816 (ESKSQSEDLGRKPM). Disordered regions lie at residues 803–860 (ESKS…GSSV) and 936–1023 (SPIK…ERKQ). Phosphoserine is present on residues S936 and S977. 2 stretches are compositionally biased toward polar residues: residues 979–992 (CIST…TSQF) and 1000–1010 (SLNGKGESSLT). S1000 is modified (phosphoserine). Positions 1013–1023 (ERIEHNGERKQ) are enriched in basic and acidic residues.

As to quaternary structure, interacts with PPP1CC. In terms of processing, phosphorylated by CDK1. May regulate its subcellular location. As to expression, ubiquitously expressed.

It is found in the nucleus. Regulator of chromosome structure during mitosis required for condensin-depleted chromosomes to retain their compact architecture through anaphase. Acts by mediating the recruitment of phopsphatase PP1-gamma subunit (PPP1CC) to chromatin at anaphase and into the following interphase. At anaphase onset, its association with chromatin targets a pool of PPP1CC to dephosphorylate substrates. In Homo sapiens (Human), this protein is Cell division cycle-associated protein 2 (CDCA2).